The chain runs to 603 residues: UvrABC system protein C (603 aa).

Residues 15–92 (DQPGCYLMKD…IKKHDPRFNI (78 aa)) form the GIY-YIG domain. The 36-residue stretch at 197 to 232 (KTVKNDLMKKMQEAAENMEFEKAGEFRDQINAIETT) folds into the UVR domain.

Belongs to the UvrC family. As to quaternary structure, interacts with UvrB in an incision complex.

The protein localises to the cytoplasm. Its function is as follows. The UvrABC repair system catalyzes the recognition and processing of DNA lesions. UvrC both incises the 5' and 3' sides of the lesion. The N-terminal half is responsible for the 3' incision and the C-terminal half is responsible for the 5' incision. The polypeptide is UvrABC system protein C (Listeria monocytogenes serotype 4b (strain CLIP80459)).